Consider the following 958-residue polypeptide: Transcription factor PfmaH (958 aa).

The segment at residues 44-70 (CLNCSQAKTGCNKEVPCQRCQDKGLHC) is a DNA-binding region (zn(2)-C6 fungal-type). The interval 272-301 (EFAGSPSGVSPFGDLSTSNSEPSSSSWGSS) is disordered. Low complexity predominate over residues 287 to 301 (STSNSEPSSSSWGSS).

The protein localises to the nucleus. Functionally, transcription factor; part of the gene cluster that mediates the biosynthesis of dihydroxynaphthalene (DHN)-melanin, a bluish-green pigment forming a dark layer in the conidial wall that protects the conidia from UV radiations. The 2 transcription factors present in the cluster, PfmaF and PfmaH, coordinately regulate DHN-melanin production. PfmaH acts as a pathway specific regulator to mediate the expression of Pfma cluster genes including PfmaJ, leading to DHN-melanin production in conidia, and regulates the conidial formation. The sequence is that of Transcription factor PfmaH (PfmaH) from Pestalotiopsis fici (strain W106-1 / CGMCC3.15140).